Reading from the N-terminus, the 370-residue chain is UDP-N-acetylglucosamine--N-acetylmuramyl-(pentapeptide) pyrophosphoryl-undecaprenol N-acetylglucosamine transferase (370 aa).

UDP-N-acetyl-alpha-D-glucosamine contacts are provided by residues threonine 14–glycine 16, asparagine 125, arginine 168, serine 196, and glutamine 297.

The protein belongs to the glycosyltransferase 28 family. MurG subfamily.

The protein localises to the cell inner membrane. It carries out the reaction di-trans,octa-cis-undecaprenyl diphospho-N-acetyl-alpha-D-muramoyl-L-alanyl-D-glutamyl-meso-2,6-diaminopimeloyl-D-alanyl-D-alanine + UDP-N-acetyl-alpha-D-glucosamine = di-trans,octa-cis-undecaprenyl diphospho-[N-acetyl-alpha-D-glucosaminyl-(1-&gt;4)]-N-acetyl-alpha-D-muramoyl-L-alanyl-D-glutamyl-meso-2,6-diaminopimeloyl-D-alanyl-D-alanine + UDP + H(+). Its pathway is cell wall biogenesis; peptidoglycan biosynthesis. In terms of biological role, cell wall formation. Catalyzes the transfer of a GlcNAc subunit on undecaprenyl-pyrophosphoryl-MurNAc-pentapeptide (lipid intermediate I) to form undecaprenyl-pyrophosphoryl-MurNAc-(pentapeptide)GlcNAc (lipid intermediate II). The polypeptide is UDP-N-acetylglucosamine--N-acetylmuramyl-(pentapeptide) pyrophosphoryl-undecaprenol N-acetylglucosamine transferase (Nitrobacter hamburgensis (strain DSM 10229 / NCIMB 13809 / X14)).